Consider the following 486-residue polypeptide: Transcription factor VOZ1 (486 aa).

The tract at residues 208-405 (PPSAFLGPKC…VDGKKTSKGK (198 aa)) is VOZ. Zn(2+) is bound by residues C217, C222, C236, and H240. The C3H1-type; atypical zinc finger occupies 217-240 (CALWDCPRPAQGFDWFQDYCSSFH). The segment at 424–445 (EFPPENNTTNTTNNNKRCIKGR) is disordered. Positions 429–438 (NNTTNTTNNN) are enriched in low complexity.

Homodimer. Interacts with phytochrome B (phyB). As to expression, ubiquitous. Expressed in the vascular bundles of various tissues, specifically in the phloem.

The protein resides in the cytoplasm. It is found in the nucleus. Functionally, transcriptional activator acting positively in the phytochrome B signaling pathway. Functions redundantly with VOZ2 to promote flowering downstream of phytochrome B (phyB). Down-regulates 'FLOWERING LOCUS C' (FLC) and up-regulates 'FLOWERING LOCUS T' (FT). Binds to the 38-bp cis-acting region of the AVP1 gene. Interacts with phyB in the cytoplasm and is translocated to the nucleus at signal transmission, where it is subjected to degradation in a phytochrome-dependent manner. This chain is Transcription factor VOZ1 (VOZ1), found in Arabidopsis thaliana (Mouse-ear cress).